Here is a 118-residue protein sequence, read N- to C-terminus: MARVKRGVIARARHKKILKQAKGYYGARSRVYRVAFQAVIKAGQYAYRDRRQRKRQFRQLWIARINAAARVNGLSYSKFINGLKKASIEIDRKILADIAVFDKVAFGALVEKAKAALA.

It belongs to the bacterial ribosomal protein bL20 family.

In terms of biological role, binds directly to 23S ribosomal RNA and is necessary for the in vitro assembly process of the 50S ribosomal subunit. It is not involved in the protein synthesizing functions of that subunit. This Serratia proteamaculans (strain 568) protein is Large ribosomal subunit protein bL20.